Consider the following 88-residue polypeptide: Small ribosomal subunit protein uS15 (88 aa).

Positions 1–20 (MLATEKKQELIDQYKRHEGD) are enriched in basic and acidic residues. The segment at 1–21 (MLATEKKQELIDQYKRHEGDT) is disordered.

The protein belongs to the universal ribosomal protein uS15 family. As to quaternary structure, part of the 30S ribosomal subunit. Forms a bridge to the 50S subunit in the 70S ribosome, contacting the 23S rRNA.

Functionally, one of the primary rRNA binding proteins, it binds directly to 16S rRNA where it helps nucleate assembly of the platform of the 30S subunit by binding and bridging several RNA helices of the 16S rRNA. In terms of biological role, forms an intersubunit bridge (bridge B4) with the 23S rRNA of the 50S subunit in the ribosome. The protein is Small ribosomal subunit protein uS15 of Syntrophotalea carbinolica (strain DSM 2380 / NBRC 103641 / GraBd1) (Pelobacter carbinolicus).